We begin with the raw amino-acid sequence, 65 residues long: Large ribosomal subunit protein bL35 (65 aa).

The segment at 1-25 is disordered; that stretch reads MPKMKSHRGAAKRFKKTGTGKLKRA.

This sequence belongs to the bacterial ribosomal protein bL35 family.

In Clostridium botulinum (strain Eklund 17B / Type B), this protein is Large ribosomal subunit protein bL35.